We begin with the raw amino-acid sequence, 204 residues long: Large ribosomal subunit protein bL25 (204 aa).

A disordered region spans residues 1-23 (MSETLHLSAETRDRAGKGASRAL).

This sequence belongs to the bacterial ribosomal protein bL25 family. CTC subfamily. As to quaternary structure, part of the 50S ribosomal subunit; part of the 5S rRNA/L5/L18/L25 subcomplex. Contacts the 5S rRNA. Binds to the 5S rRNA independently of L5 and L18.

In terms of biological role, this is one of the proteins that binds to the 5S RNA in the ribosome where it forms part of the central protuberance. The sequence is that of Large ribosomal subunit protein bL25 from Novosphingobium aromaticivorans (strain ATCC 700278 / DSM 12444 / CCUG 56034 / CIP 105152 / NBRC 16084 / F199).